A 59-amino-acid polypeptide reads, in one-letter code: Large ribosomal subunit protein bL32 (59 aa).

Belongs to the bacterial ribosomal protein bL32 family.

In Malacoplasma penetrans (strain HF-2) (Mycoplasma penetrans), this protein is Large ribosomal subunit protein bL32.